A 246-amino-acid chain; its full sequence is NH(3)-dependent NAD(+) synthetase (246 aa).

29–36 (GLSGGIDS) contributes to the ATP binding site. Aspartate 35 contacts Mg(2+). Deamido-NAD(+) is bound at residue arginine 110. Residue threonine 130 coordinates ATP. Glutamate 135 serves as a coordination point for Mg(2+). ATP contacts are provided by lysine 159 and serine 181.

This sequence belongs to the NAD synthetase family. In terms of assembly, homodimer.

The enzyme catalyses deamido-NAD(+) + NH4(+) + ATP = AMP + diphosphate + NAD(+) + H(+). It functions in the pathway cofactor biosynthesis; NAD(+) biosynthesis; NAD(+) from deamido-NAD(+) (ammonia route): step 1/1. In terms of biological role, catalyzes the ATP-dependent amidation of deamido-NAD to form NAD. Uses ammonia as a nitrogen source. This chain is NH(3)-dependent NAD(+) synthetase, found in Campylobacter jejuni subsp. doylei (strain ATCC BAA-1458 / RM4099 / 269.97).